A 114-amino-acid chain; its full sequence is Probable non-functional T cell receptor beta variable 5-3 (114 aa).

Residues 1 to 21 (MGPGLLCWELLYLLGAGPVEA) form the signal peptide. The 93-residue stretch at 22–114 (GVTQSPTHLI…SALYLCARSL (93 aa)) folds into the Ig-like domain. Cys-42 and Cys-110 are disulfide-bonded. Asn-96 carries N-linked (GlcNAc...) asparagine glycosylation.

Alpha-beta TR is a heterodimer composed of an alpha and beta chain; disulfide-linked. The alpha-beta TR is associated with the transmembrane signaling CD3 coreceptor proteins to form the TR-CD3 (TcR or TCR). The assembly of alpha-beta TR heterodimers with CD3 occurs in the endoplasmic reticulum where a single alpha-beta TR heterodimer associates with one CD3D-CD3E heterodimer, one CD3G-CD3E heterodimer and one CD247 homodimer forming a stable octameric structure. CD3D-CD3E and CD3G-CD3E heterodimers preferentially associate with TR alpha and TR beta chains, respectively. The association of the CD247 homodimer is the last step of TcR assembly in the endoplasmic reticulum and is required for transport to the cell surface.

Its subcellular location is the cell membrane. In terms of biological role, probable non-functional open reading frame (ORF) of V region of the variable domain of T cell receptor (TR) beta chain. Non-functional ORF generally cannot participate in the synthesis of a productive T cell receptor (TR) chain due to altered V-(D)-J or switch recombination and/or splicing site (at mRNA level) and/or conserved amino acid change (protein level). Alpha-beta T cell receptors are antigen specific receptors which are essential to the immune response and are present on the cell surface of T lymphocytes. Recognize peptide-major histocompatibility (MH) (pMH) complexes that are displayed by antigen presenting cells (APC), a prerequisite for efficient T cell adaptive immunity against pathogens. Binding of alpha-beta TR to pMH complex initiates TR-CD3 clustering on the cell surface and intracellular activation of LCK that phosphorylates the ITAM motifs of CD3G, CD3D, CD3E and CD247 enabling the recruitment of ZAP70. In turn ZAP70 phosphorylates LAT, which recruits numerous signaling molecules to form the LAT signalosome. The LAT signalosome propagates signal branching to three major signaling pathways, the calcium, the mitogen-activated protein kinase (MAPK) kinase and the nuclear factor NF-kappa-B (NF-kB) pathways, leading to the mobilization of transcription factors that are critical for gene expression and essential for T cell growth and differentiation. The T cell repertoire is generated in the thymus, by V-(D)-J rearrangement. This repertoire is then shaped by intrathymic selection events to generate a peripheral T cell pool of self-MH restricted, non-autoaggressive T cells. Post-thymic interaction of alpha-beta TR with the pMH complexes shapes TR structural and functional avidity. The protein is Probable non-functional T cell receptor beta variable 5-3 of Homo sapiens (Human).